The sequence spans 196 residues: MIKQASFITSAANKSNWINDDVSEICLIGRSNVGKSSFINSLTNNNKLAKISNTPGKTRLLNFFEINKGEYRLVDAPGYGYAKVDDSIKIQFAKMMEEYFINRKNLKGVFLLLDLRHKPSNDDIMMYQFLKHYNIPVVIIGTKLDKLKKNEYIKNEKMIKEAINFYQEDDFIKISNLNKTNIIKCYELINKLLGSK.

An EngB-type G domain is found at 21-195 (DVSEICLIGR…YELINKLLGS (175 aa)). GTP is bound by residues 29–36 (GRSNVGKS), 56–60 (GKTRL), 75–78 (DAPG), 142–145 (TKLD), and 174–176 (ISN). Mg(2+) contacts are provided by S36 and T58.

It belongs to the TRAFAC class TrmE-Era-EngA-EngB-Septin-like GTPase superfamily. EngB GTPase family. Mg(2+) is required as a cofactor.

In terms of biological role, necessary for normal cell division and for the maintenance of normal septation. The sequence is that of Probable GTP-binding protein EngB from Mycoplasma capricolum subsp. capricolum (strain California kid / ATCC 27343 / NCTC 10154).